A 371-amino-acid chain; its full sequence is Neuropeptide Y receptor type 6 (371 aa).

Residues 1–31 (MEVLTNQPTPNKTSGKSNNSAFFYFESCQPP) lie on the Extracellular side of the membrane. N11 and N18 each carry an N-linked (GlcNAc...) asparagine glycan. Residues 32 to 52 (FLAILLLLIAYTVILIMGIFG) form a helical membrane-spanning segment. The Cytoplasmic portion of the chain corresponds to 53–82 (NLSLIIIIFKKQREAQNVTNILIANLSLSD). A helical membrane pass occupies residues 83 to 103 (ILVCVMCIPFTVIYTLMDHWV). The Extracellular portion of the chain corresponds to 104–111 (FGNTMCKL). A disulfide bond links C109 and C196. A helical membrane pass occupies residues 112–132 (TSYVQSVSVSVSIFSLVLIAI). Residues 133 to 150 (ERYQLIVNPRGWKPRVAH) lie on the Cytoplasmic side of the membrane. Residues 151–171 (AYWGIILIWLISLTLSIPLFL) traverse the membrane as a helical segment. The Extracellular segment spans residues 172 to 206 (SYHLTNEPFHNLSLPTDIYTHQVACVEIWPSKLNQ). A glycan (N-linked (GlcNAc...) asparagine) is linked at N182. A helical transmembrane segment spans residues 207–227 (LLFSTSLFMLQYFVPLGFILI). At 228-263 (CYLKIVLCLRKRTRQVDRRKENKSRLNENKRVNVML) the chain is on the cytoplasmic side. Residues 264 to 284 (ISIVVTFGACWLPLNIFNVIF) form a helical membrane-spanning segment. Residues 285–297 (DWYHEMLMSCHHD) are Extracellular-facing. A helical transmembrane segment spans residues 298–318 (LVFVVCHLIAMVSTCINPLFY). Over 319-371 (GFLNKNFQKDLMMLIHHCWCGEPQESYENIAMSTMHTDESKGSLKLAHIPTGI) the chain is Cytoplasmic. A lipid anchor (S-palmitoyl cysteine) is attached at C336.

This sequence belongs to the G-protein coupled receptor 1 family. Kidney and discrete regions of the hypothalamus including the suprachiasmatic nucleus, anterior hypothalamus, bed nucleus stria terminalis, and the ventromedial nucleus.

The protein resides in the cell membrane. Its function is as follows. Receptor for neuropeptide Y and peptide YY. The rank order of affinity of this receptor for pancreatic polypeptides is NPY = PYY &gt;= NPY (2-36) = [Leu-31, Pro-34] NPY &gt; NPY (13-36) &gt; PP. The activity of this receptor is mediated by G proteins that inhibits adenylate cyclase activity. The polypeptide is Neuropeptide Y receptor type 6 (Npy6r) (Mus musculus (Mouse)).